The chain runs to 648 residues: MDKTLSRNEAKELMQLLGLDMTCWGNLPLMRTKYLSKCKEFHPDKGGNEEKMKKLNSLYLKLQECVSTVHQLNEEEDEVWSSSQIPTYGTPDWDYWWSQFNSYWEEELRCNEEMPKSPGETPTKRTREDDEEPQCSQATPPKKKKDNATDASLSFPKELEEFVSQAVFSNRTLTAFVIHTTKEKAETLYKKLLSKFKCNFASRHSYYNTALVFILTPFRHRVSAVNNFCKGYCTISFLFCKGVNNAYGLYSRMTRDPFTLCEENIPGGLKENDFKAEDLYGEFKDQLNWKALSEFALELGIDDVYLLLGLYLQLSIKVEECEKCNSNEDATHNRLHMEHQKNALLFSDSKSQKNVCQQAIDVVIAKRRVDSLNMSREDLLARRFEKILDKMDKTIKGEQDVLLYMAGVAWYLGLNGKIDELVYRYLKVIVENVPKKRYWVFKGPINSGKTTVAAALLDLCGGKALNINIPADRLNFELGVAIDQFTVVFEDVKGQVGDNKLLPSGNGMSNLDNLRDYLDGSVKVNLEKKHLNKRSQIFPPGIVTMNEYLVPATLAPRFHKTVLFTPKRHLKESLDKTPELMVKRVLQSGMCILLMLIWCRPVSDFHPCIQAKVVYWKELLDKYIGLTEFADMQMNVTNGCNILEKHNA.

An N-acetylmethionine; by host modification is found at Met1. The 78-residue stretch at 12–89 folds into the J domain; that stretch reads ELMQLLGLDM…WSSSQIPTYG (78 aa). The short motif at 108-112 is the LXCXE motif element; the sequence is LRCNE. A disordered region spans residues 111–150; the sequence is NEEMPKSPGETPTKRTREDDEEPQCSQATPPKKKKDNATD. Ser117 bears the Phosphoserine; by host mark. Thr139 is modified (phosphothreonine; by host). The short motif at 140–147 is the Nuclear localization signal element; the sequence is PPKKKKDN. The T-ag OBD DNA-binding region spans 156 to 271; that stretch reads PKELEEFVSQ…EENIPGGLKE (116 aa). The T-ag D1-type zinc-finger motif lies at 284–376; it reads KDQLNWKALS…RRVDSLNMSR (93 aa). Zn(2+)-binding residues include Cys321, Cys324, His332, and His336. In terms of domain architecture, SF3 helicase spans 417–579; that stretch reads KIDELVYRYL…LKESLDKTPE (163 aa). ATP is bound at residue 443 to 450; that stretch reads GPINSGKT.

Forms homohexamers in the presence of ATP. Interacts with host HDAC1. Interacts (via LXCXE domain) with host RB1; the interaction induces the aberrant dissociation of RB1-E2F1 complex thereby disrupting RB1's activity. Interacts (via LXCXE domain) with host pRB-related proteins RBL1 and RBL2. Interacts (via C-terminus) with host TOP1 and POLA1 allowing DNA replication. Interacts with host TP53, inhibiting TP53 binding to DNA. Interacts with host preinitiation complex components TBP, TFIIA and TFIID to regulate transcription initiation. Requires Mg(2+) as cofactor. In terms of processing, phosphorylated on both serine and threonine residues. Small t antigen inhibits the dephosphorylation by the AC form of PP2A. O-Glycosylated near the C-terminal region. Post-translationally, acetylated by CBP in a TP53-dependent manner.

It is found in the host nucleus. The enzyme catalyses Couples ATP hydrolysis with the unwinding of duplex DNA by translocating in the 3'-5' direction.. It carries out the reaction ATP + H2O = ADP + phosphate + H(+). Isoform large T antigen is a key early protein essential for both driving viral replication and inducing cellular transformation. Plays a role in viral genome replication by driving entry of quiescent cells into the cell cycle and by autoregulating the synthesis of viral early mRNA. Displays highly oncogenic activities by corrupting the host cellular checkpoint mechanisms that guard cell division and the transcription, replication, and repair of DNA. Participates in the modulation of cellular gene expression preceeding viral DNA replication. This step involves binding to host key cell cycle regulators retinoblastoma protein RB1/pRb and TP53. Induces the disassembly of host E2F1 transcription factors from RB1, thus promoting transcriptional activation of E2F1-regulated S-phase genes. Inhibits host TP53 binding to DNA, abrogating the ability of TP53 to stimulate gene expression. Plays the role of a TFIID-associated factor (TAF) in transcription initiation for all three RNA polymerases, by stabilizing the TBP-TFIIA complex on promoters. Initiates viral DNA replication and unwinding via interactions with the viral origin of replication. Binds two adjacent sites in the SV40 origin. The replication fork movement is facilitated by Large T antigen helicase activity. Has processive 3'-5' DNA helicase activity which requires a short 3' single-stranded region and ATP. Activates the transcription of viral late mRNA, through host TBP and TFIIA stabilization. Interferes with histone deacetylation mediated by HDAC1, leading to activation of transcription. The sequence is that of Large T antigen from Homo sapiens (Human).